A 539-amino-acid chain; its full sequence is uncharacterized protein (539 aa).

6–20 (LIIGGGGAAARAAIE) serves as a coordination point for FAD. Catalysis depends on residues His-227 and Arg-243.

This sequence belongs to the FAD-dependent oxidoreductase 2 family. FRD/SDH subfamily. FAD is required as a cofactor.

This is an uncharacterized protein from Methanocaldococcus jannaschii (strain ATCC 43067 / DSM 2661 / JAL-1 / JCM 10045 / NBRC 100440) (Methanococcus jannaschii).